Consider the following 455-residue polypeptide: Probable glycine dehydrogenase (decarboxylating) subunit 1 (455 aa).

The protein belongs to the GcvP family. N-terminal subunit subfamily. As to quaternary structure, the glycine cleavage system is composed of four proteins: P, T, L and H. In this organism, the P 'protein' is a heterodimer of two subunits.

It catalyses the reaction N(6)-[(R)-lipoyl]-L-lysyl-[glycine-cleavage complex H protein] + glycine + H(+) = N(6)-[(R)-S(8)-aminomethyldihydrolipoyl]-L-lysyl-[glycine-cleavage complex H protein] + CO2. In terms of biological role, the glycine cleavage system catalyzes the degradation of glycine. The P protein binds the alpha-amino group of glycine through its pyridoxal phosphate cofactor; CO(2) is released and the remaining methylamine moiety is then transferred to the lipoamide cofactor of the H protein. The polypeptide is Probable glycine dehydrogenase (decarboxylating) subunit 1 (Francisella tularensis subsp. mediasiatica (strain FSC147)).